We begin with the raw amino-acid sequence, 87 residues long: NADH dehydrogenase [ubiquinone] 1 alpha subcomplex subunit 4-like 2 (87 aa).

The protein belongs to the complex I NDUFA4 subunit family.

The chain is NADH dehydrogenase [ubiquinone] 1 alpha subcomplex subunit 4-like 2 (Ndufa4l2) from Mus musculus (Mouse).